We begin with the raw amino-acid sequence, 289 residues long: Probable signal peptidase I (289 aa).

Residues 1–53 are Cytoplasmic-facing; that stretch reads MTETTDSVPEPPSDADQLQPKVSICGLDMPAEVSETAAEAAIGVSEPKKRSAL. A helical membrane pass occupies residues 54–74; it reads WEFAILAVIAIGLYYVMLTFV. Residues 75–289 lie on the Extracellular side of the membrane; that stretch reads ARPYLIPSES…VGSVNSQQGQ (215 aa). Active-site residues include Ser84 and Lys162.

Belongs to the peptidase S26 family.

Its subcellular location is the cell membrane. It carries out the reaction Cleavage of hydrophobic, N-terminal signal or leader sequences from secreted and periplasmic proteins.. This chain is Probable signal peptidase I (lepB), found in Mycobacterium leprae (strain TN).